Consider the following 510-residue polypeptide: Bone morphogenetic protein 6 (510 aa).

The signal sequence occupies residues 1–20 (MPGLGRRAQWLCWWWGLLCS). A propeptide spanning residues 21 to 371 (CGPPPLRPPL…VSEVHVRTTR (351 aa)) is cleaved from the precursor. Disordered stretches follow at residues 87–129 (PHRP…RLKS) and 143–199 (NDDE…PLTS). The segment covering 106–116 (PQQQQQQQQQQ) has biased composition (low complexity). N-linked (GlcNAc...) asparagine glycans are attached at residues asparagine 238, asparagine 266, asparagine 383, asparagine 401, and asparagine 451. The interval 370–402 (TRSASSRRRQQSRNRSTQSQDVSRGSGSSDYNG) is disordered. The segment covering 390–401 (DVSRGSGSSDYN) has biased composition (polar residues). Intrachain disulfides connect cysteine 409–cysteine 475, cysteine 438–cysteine 507, and cysteine 442–cysteine 509.

This sequence belongs to the TGF-beta family. Interacts with SOSTDC1. Interacts (when glycosylated) with type I receptor ACVR1; the interaction may induce HAMP expression. Interacts with type II receptor ACVR2B. Interacts with Hemojuvelin/HJV. Interacts with ERFE; the interaction inhibits BMP-induced transcription of HAMP. Interacts with BMPR1A/ALK3. Forms heterodimers with BMP2 in vitro; the heterodimer then binds to its receptor BMPR1A /ALK3 and may induce HAMP expression. As to expression, expressed in the lung. Low levels seen in the kidney.

The protein localises to the secreted. Functionally, growth factor of the TGF-beta superfamily that plays essential roles in many developmental processes including cartilage and bone formation. Also plays an important role in the regulation of HAMP/hepcidin expression and iron metabolism by acting as a ligand for hemojuvelin/HJV. Also acts to promote expression of HAMP, potentially via the interaction with its receptor BMPR1A/ALK3. Initiates the canonical BMP signaling cascade by associating with type I receptor ACVR1 and type II receptor ACVR2B. In turn, ACVR1 propagates signal by phosphorylating SMAD1/5/8 that travel to the nucleus and act as activators and repressors of transcription of target. Can also signal through non-canonical pathway such as TAZ-Hippo signaling cascade to modulate VEGF signaling by regulating VEGFR2 expression. This chain is Bone morphogenetic protein 6 (Bmp6), found in Mus musculus (Mouse).